We begin with the raw amino-acid sequence, 69 residues long: Sec-independent protein translocase protein TatA (69 aa).

Residues 1-21 traverse the membrane as a helical segment; that stretch reads MFGKLGMPELVLIFAVALVIF.

Belongs to the TatA/E family. In terms of assembly, forms a complex with TatC.

Its subcellular location is the cell membrane. In terms of biological role, part of the twin-arginine translocation (Tat) system that transports large folded proteins containing a characteristic twin-arginine motif in their signal peptide across membranes. TatA could form the protein-conducting channel of the Tat system. This Alkaliphilus metalliredigens (strain QYMF) protein is Sec-independent protein translocase protein TatA.